We begin with the raw amino-acid sequence, 308 residues long: Phenylcoumaran benzylic ether reductase Pyrc5 (308 aa).

NADP(+) contacts are provided by residues 11-17, arginine 36, and lysine 45; that span reads GGTGYIG. Lysine 133 acts as the Proton acceptor in catalysis. Residue arginine 137 coordinates NADP(+).

This sequence belongs to the NmrA-type oxidoreductase family. Isoflavone reductase subfamily.

The catalysed reaction is (-)-dehydrodiconiferyl alcohol + NADPH + H(+) = (S)-isodihydrodehydrodiconiferyl alcohol + NADP(+). It carries out the reaction (+)-dehydrodiconiferyl alcohol + NADPH + H(+) = (R)-isodihydrodehydrodiconiferyl alcohol + NADP(+). In terms of biological role, oxidoreductase involved in lignan biosynthesis. Catalyzes the NADPH-dependent reduction of phenylcoumaran benzylic ethers. Converts dehydrodiconiferyl alcohol (DDC) to isodihydrodehydrodiconiferyl alcohol (IDDDC). The chain is Phenylcoumaran benzylic ether reductase Pyrc5 from Pyrus communis (Pear).